A 64-amino-acid polypeptide reads, in one-letter code: Large ribosomal subunit protein bL33 (64 aa).

2 stretches are compositionally biased toward basic and acidic residues: residues Glu16–Arg25 and Thr33–Thr42. A disordered region spans residues Glu16 to Thr42.

The protein belongs to the bacterial ribosomal protein bL33 family.

This is Large ribosomal subunit protein bL33 from Prochlorococcus marinus (strain MIT 9301).